A 240-amino-acid chain; its full sequence is Large ribosomal subunit protein uL2 (240 aa).

A disordered region spans residues 199–240 (DHPFGGGGRQHPGRPKSVSRDAAPGRKVGDIASKRTGRGGNE). The span at 221–231 (APGRKVGDIAS) shows a compositional bias: basic and acidic residues.

This sequence belongs to the universal ribosomal protein uL2 family. As to quaternary structure, part of the 50S ribosomal subunit. Forms a bridge to the 30S subunit in the 70S ribosome.

One of the primary rRNA binding proteins. Required for association of the 30S and 50S subunits to form the 70S ribosome, for tRNA binding and peptide bond formation. It has been suggested to have peptidyltransferase activity; this is somewhat controversial. Makes several contacts with the 16S rRNA in the 70S ribosome. In Halobacterium salinarum (strain ATCC 29341 / DSM 671 / R1), this protein is Large ribosomal subunit protein uL2.